Reading from the N-terminus, the 234-residue chain is Alpha N-terminal protein methyltransferase 1 (234 aa).

Residues glycine 71, arginine 76, aspartate 93 to valine 95, leucine 120 to glutamine 121, and glutamine 136 contribute to the S-adenosyl-L-methionine site.

It belongs to the methyltransferase superfamily. NTM1 family. Expressed in uterine cells and PVT neurons of the tail. Expressed in pharynx, intestine and DVB tail neuron.

It carries out the reaction N-terminal L-alanyl-L-prolyl-L-lysyl-[protein] + 3 S-adenosyl-L-methionine = N-terminal N,N,N-trimethyl-L-alanyl-L-prolyl-L-lysyl-[protein] + 3 S-adenosyl-L-homocysteine + 3 H(+). It catalyses the reaction N-terminal L-seryl-L-prolyl-L-lysyl-[protein] + 3 S-adenosyl-L-methionine = N-terminal N,N,N-trimethyl-L-seryl-L-prolyl-L-lysyl-[protein] + 3 S-adenosyl-L-homocysteine + 3 H(+). The enzyme catalyses N-terminal L-prolyl-L-prolyl-L-lysyl-[protein] + 2 S-adenosyl-L-methionine = N-terminal N,N-dimethyl-L-prolyl-L-prolyl-L-lysyl-[protein] + 2 S-adenosyl-L-homocysteine + 2 H(+). Functionally, alpha-N-methyltransferase that methylates the N-terminus of target proteins containing the N-terminal motif [Ala/Pro/Ser]-Pro-Lys when the initiator Met is cleaved. Specifically catalyzes mono-, di- or tri-methylation of exposed alpha-amino group of Ala or Ser residue in the [Ala/Ser]-Pro-Lys motif and mono- or di-methylation of Pro in the Pro-Pro-Lys motif. Probably required for the synthesis of neurotransmitter melatonin from serotonin, which plays a role in promoting a sleep-like state, called lethargus, during larval development. This is Alpha N-terminal protein methyltransferase 1 from Caenorhabditis elegans.